Reading from the N-terminus, the 896-residue chain is Desmocollin-3 (896 aa).

The first 31 residues, 1-31, serve as a signal peptide directing secretion; the sequence is MVVPEFRSPQCRALCTKLLLTLWVFSFVGEA. A propeptide spanning residues 32–135 is cleaved from the precursor; the sequence is CKKVTFHVPS…KETVLRRSKR (104 aa). 5 consecutive Cadherin domains span residues 136-243, 244-355, 356-472, 473-580, and 581-691; these read RWAP…YPLF, TEAI…APTF, RQNT…GPEC, KPPE…EIIQ, and DYIV…TLGK. The Extracellular segment spans residues 136-695; the sequence is RWAPIPCSMQ…GITLGKWAIL (560 aa). A glycan (N-linked (GlcNAc...) asparagine) is linked at asparagine 166. N-linked (GlcNAc...) asparagine glycans are attached at residues asparagine 392 and asparagine 547. An N-linked (GlcNAc...) (high mannose) asparagine glycan is attached at asparagine 630. A helical membrane pass occupies residues 696–716; the sequence is AILLGIALLFSVLLTLVCGVV. Residues 717–896 lie on the Cytoplasmic side of the membrane; sequence TARKGKHFPE…LTLAETCTKR (180 aa).

In terms of assembly, may form homodimers. Interacts with DSG1; there is evidence to suggest that the interaction promotes cell-cell adhesion of keratinocytes. In terms of tissue distribution, expressed in the basal layers of epidermal stratified epithelia from birth (at protein level).

It is found in the cell membrane. The protein localises to the cell junction. Its subcellular location is the desmosome. It localises to the cytoplasm. Functionally, a component of desmosome cell-cell junctions which are required for positive regulation of cellular adhesion. Required for cell-cell adhesion in the epidermis, as a result required for the maintenance of the dermal cohesion and the dermal barrier function. Required for cell-cell adhesion of epithelial cell layers surrounding the telogen hair club, as a result plays an important role in telogen hair shaft anchorage. Essential for successful completion of embryo compaction and development beyond the 8-cell stage. This chain is Desmocollin-3 (Dsc3), found in Mus musculus (Mouse).